We begin with the raw amino-acid sequence, 123 residues long: UPF0738 protein Bcer98_0913 (123 aa).

It belongs to the UPF0738 family.

The chain is UPF0738 protein Bcer98_0913 from Bacillus cytotoxicus (strain DSM 22905 / CIP 110041 / 391-98 / NVH 391-98).